Reading from the N-terminus, the 285-residue chain is Small ribosomal subunit protein uS2 (285 aa).

The tract at residues 228–285 (RAGLSADKDAKPEAGAGEPLAEWEQELLSQAAPAAEAEAAPAAEAEAAPAAEAPATEA) is disordered. A compositionally biased stretch (low complexity) spans 258–285 (AAPAAEAEAAPAAEAEAAPAAEAPATEA).

It belongs to the universal ribosomal protein uS2 family.

The chain is Small ribosomal subunit protein uS2 from Rhodococcus erythropolis (strain PR4 / NBRC 100887).